Consider the following 414-residue polypeptide: Arrestin domain-containing protein 3 (414 aa).

2 short sequence motifs (PPxY motif) span residues 346–349 (PPSY) and 391–394 (PPLY). Residues 393–414 (LYSEIDPNPDQSSEDRPSCPSR) form a disordered region. Residues 405 to 414 (SEDRPSCPSR) are compositionally biased toward basic and acidic residues.

It belongs to the arrestin family. In terms of assembly, interacts (via PPxY motifs) with NEDD4 (via WW domains). Interacts with ADRB2. Interacts with ADRB3. Interacts with HGS (via PPxY motifs). Does not bind TXN (thioredoxin). Interacts with ITCH. Detected in visceral fat, subcutaneous fat, brown fat and skeletal muscle, and at lower levels in kidney.

The protein localises to the cytoplasm. The protein resides in the cell membrane. It is found in the lysosome. Its subcellular location is the endosome. It localises to the early endosome. Its function is as follows. Adapter protein that plays a role in regulating cell-surface expression of adrenergic receptors and probably also other G protein-coupled receptors. Plays a role in NEDD4-mediated ubiquitination and endocytosis af activated ADRB2 and subsequent ADRB2 degradation. May recruit NEDD4 to ADRB2. Alternatively, may function as adapter protein that does not play a major role in recruiting NEDD4 to ADRB2, but rather plays a role in a targeting ADRB2 to endosomes. The polypeptide is Arrestin domain-containing protein 3 (Arrdc3) (Mus musculus (Mouse)).